Here is a 374-residue protein sequence, read N- to C-terminus: Ribosomal RNA large subunit methyltransferase G (374 aa).

It belongs to the methyltransferase superfamily. RlmG family.

The protein localises to the cytoplasm. The enzyme catalyses guanosine(1835) in 23S rRNA + S-adenosyl-L-methionine = N(2)-methylguanosine(1835) in 23S rRNA + S-adenosyl-L-homocysteine + H(+). Specifically methylates the guanine in position 1835 (m2G1835) of 23S rRNA. The protein is Ribosomal RNA large subunit methyltransferase G of Pseudomonas syringae pv. tomato (strain ATCC BAA-871 / DC3000).